The chain runs to 495 residues: Glutamyl-tRNA(Gln) amidotransferase subunit A (495 aa).

Residues lysine 78 and serine 158 each act as charge relay system in the active site. Serine 182 serves as the catalytic Acyl-ester intermediate.

This sequence belongs to the amidase family. GatA subfamily. Heterotrimer of A, B and C subunits.

It carries out the reaction L-glutamyl-tRNA(Gln) + L-glutamine + ATP + H2O = L-glutaminyl-tRNA(Gln) + L-glutamate + ADP + phosphate + H(+). Functionally, allows the formation of correctly charged Gln-tRNA(Gln) through the transamidation of misacylated Glu-tRNA(Gln) in organisms which lack glutaminyl-tRNA synthetase. The reaction takes place in the presence of glutamine and ATP through an activated gamma-phospho-Glu-tRNA(Gln). This Ruegeria sp. (strain TM1040) (Silicibacter sp.) protein is Glutamyl-tRNA(Gln) amidotransferase subunit A.